The following is a 111-amino-acid chain: Phosphoribosyl-ATP pyrophosphatase (111 aa).

The protein belongs to the PRA-PH family.

Its subcellular location is the cytoplasm. The catalysed reaction is 1-(5-phospho-beta-D-ribosyl)-ATP + H2O = 1-(5-phospho-beta-D-ribosyl)-5'-AMP + diphosphate + H(+). It functions in the pathway amino-acid biosynthesis; L-histidine biosynthesis; L-histidine from 5-phospho-alpha-D-ribose 1-diphosphate: step 2/9. This is Phosphoribosyl-ATP pyrophosphatase (hisE) from Pseudomonas aeruginosa (strain ATCC 15692 / DSM 22644 / CIP 104116 / JCM 14847 / LMG 12228 / 1C / PRS 101 / PAO1).